A 104-amino-acid chain; its full sequence is Large ribosomal subunit protein uL24 (104 aa).

Belongs to the universal ribosomal protein uL24 family. As to quaternary structure, part of the 50S ribosomal subunit.

Its function is as follows. One of two assembly initiator proteins, it binds directly to the 5'-end of the 23S rRNA, where it nucleates assembly of the 50S subunit. One of the proteins that surrounds the polypeptide exit tunnel on the outside of the subunit. The sequence is that of Large ribosomal subunit protein uL24 from Corynebacterium diphtheriae (strain ATCC 700971 / NCTC 13129 / Biotype gravis).